The following is a 216-amino-acid chain: MTDHKPSKSLPKATAKRLPQYYRLFKSLVEENVTRTNSQLISEKIGVDAATIRRDFSLFGELGRRGYGYETKVLRDFFGELLGQDQETHIALIGVGNLGRALLHYQFQDRNKMRITQAYDISGNPLVGTQTDDGIPIYNISDLEKNVKKSDIKTAILSVRKENAQEVVDTLVKAGIKGFLNFAPIRLKVPSDVVVQSIDLTKELQTLLFFMNDNKQ.

Positions 20–59 (QYYRLFKSLVEENVTRTNSQLISEKIGVDAATIRRDFSLF) form a DNA-binding region, H-T-H motif. Position 94–99 (94–99 (GVGNLG)) interacts with NAD(+).

Belongs to the transcriptional regulatory Rex family. As to quaternary structure, homodimer.

The protein localises to the cytoplasm. In terms of biological role, modulates transcription in response to changes in cellular NADH/NAD(+) redox state. The polypeptide is Redox-sensing transcriptional repressor Rex (Lactococcus lactis subsp. cremoris (strain SK11)).